A 458-amino-acid chain; its full sequence is Glutamate--tRNA ligase 2 (458 aa).

The 'HIGH' region motif lies at P20–N30. Positions G251–R255 match the 'KMSKS' region motif. Residue K254 coordinates ATP.

It belongs to the class-I aminoacyl-tRNA synthetase family. Glutamate--tRNA ligase type 1 subfamily. Monomer.

Its subcellular location is the cytoplasm. It catalyses the reaction tRNA(Glu) + L-glutamate + ATP = L-glutamyl-tRNA(Glu) + AMP + diphosphate. Its function is as follows. Catalyzes the attachment of glutamate to tRNA(Glu) in a two-step reaction: glutamate is first activated by ATP to form Glu-AMP and then transferred to the acceptor end of tRNA(Glu). The chain is Glutamate--tRNA ligase 2 from Xanthobacter autotrophicus (strain ATCC BAA-1158 / Py2).